The chain runs to 287 residues: MAIRKFKPYTPGTRQRVVTDFSEITSAKPERSLIVSKHRVKGRNNRGVITCRHRGGGHKRQYRLVDFRRDKRNINAKVAAIHYDPHRNARLALLFYEDGEKRYIIAPAGVKVGQNVISGESVPIEDGNAMPLSVMPLGSSVHCVELYAGRGAQMVRSAGASAQVMAKEGDYVALKLPSTEVRLVRKECYATLGEVGNSEIRNTSLGKAGRRRWLGRRPQVRGSVMNPCDHPHGGGEGKAPIGRAGPVTPWGKPALGLKTRKKNKPSNKLVVRRRRRVSKRSRGGRDS.

The interval 221-287 (RGSVMNPCDH…SKRSRGGRDS (67 aa)) is disordered. Residues 258 to 287 (KTRKKNKPSNKLVVRRRRRVSKRSRGGRDS) show a composition bias toward basic residues.

The protein belongs to the universal ribosomal protein uL2 family. As to quaternary structure, part of the 50S ribosomal subunit. Forms a bridge to the 30S subunit in the 70S ribosome.

Its function is as follows. One of the primary rRNA binding proteins. Required for association of the 30S and 50S subunits to form the 70S ribosome, for tRNA binding and peptide bond formation. It has been suggested to have peptidyltransferase activity; this is somewhat controversial. Makes several contacts with the 16S rRNA in the 70S ribosome. This Prochlorococcus marinus (strain AS9601) protein is Large ribosomal subunit protein uL2.